A 50-amino-acid chain; its full sequence is Small, acid-soluble spore protein P (50 aa).

Positions 1-50 are disordered; that stretch reads MSKRKMGPKQQKNPELPKSPEQPYGEPLSGSKKEKKANHSGQKHNPHHGL. Residues 33-50 show a composition bias toward basic residues; it reads KEKKANHSGQKHNPHHGL.

The protein belongs to the SspP family.

The protein localises to the spore core. This Oceanobacillus iheyensis (strain DSM 14371 / CIP 107618 / JCM 11309 / KCTC 3954 / HTE831) protein is Small, acid-soluble spore protein P.